Here is a 95-residue protein sequence, read N- to C-terminus: Small ubiquitin-related modifier 2-B (95 aa).

Residue lysine 11 forms a Glycyl lysine isopeptide (Lys-Gly) (interchain with G-Cter in SUMO) linkage. Residues 16–95 (DHINLKVAGQ…VFQQQTGGSY (80 aa)) enclose the Ubiquitin-like domain. A Glycyl lysine isopeptide (Gly-Lys) (interchain with K-? in acceptor proteins) cross-link involves residue glycine 93. The propeptide occupies 94 to 95 (SY).

It belongs to the ubiquitin family. SUMO subfamily. In terms of assembly, interacts with sae2 and ube2i. Covalently attached to a number of proteins, including top2. In terms of processing, polymeric chains can be formed through Lys-11 cross-linking. Cleavage of precursor form by a sentrin-specific protease is necessary for function.

The protein localises to the nucleus. Ubiquitin-like protein that can be covalently attached to proteins as a monomer or as a lysine-linked polymer. Covalent attachment via an isopeptide bond to its substrates requires prior activation by the E1 complex sae1-sae2 and linkage to the E2 enzyme ube2i, and can be promoted by an E3 ligase such as pias1-4. This post-translational modification on lysine residues of proteins plays a crucial role in a number of cellular processes such as nuclear transport, DNA replication and repair, mitosis and signal transduction. Polymeric sumo2 chains are also susceptible to polyubiquitination which functions as a signal for proteasomal degradation of modified proteins. In Xenopus laevis (African clawed frog), this protein is Small ubiquitin-related modifier 2-B (sumo2-b).